Reading from the N-terminus, the 166-residue chain is Large ribosomal subunit protein uL10 (166 aa).

It belongs to the universal ribosomal protein uL10 family. As to quaternary structure, part of the ribosomal stalk of the 50S ribosomal subunit. The N-terminus interacts with L11 and the large rRNA to form the base of the stalk. The C-terminus forms an elongated spine to which L12 dimers bind in a sequential fashion forming a multimeric L10(L12)X complex.

Forms part of the ribosomal stalk, playing a central role in the interaction of the ribosome with GTP-bound translation factors. The protein is Large ribosomal subunit protein uL10 of Pseudomonas putida (strain GB-1).